A 571-amino-acid polypeptide reads, in one-letter code: Optineurin (571 aa).

Disordered regions lie at residues 1-32 (MSHQ…HPNL) and 100-144 (LSHE…DQLR). The stretch at 38 to 170 (EELLQQMKEL…VSELQLKLNS (133 aa)) forms a coiled coil. The tract at residues 58–209 (MKLNNQAMKG…GPTRTVSIGT (152 aa)) is interaction with Rab8. Basic and acidic residues-rich tracts occupy residues 100 to 123 (LSHE…RSSE) and 130 to 143 (RLPR…KDQL). Residues 176–181 (DSFVEI) carry the LIR motif. Position 177 is a phosphoserine; by TBK1 (serine 177). The span at 186–197 (GEAEGSVKEIKH) shows a compositional bias: basic and acidic residues. Disordered stretches follow at residues 186–210 (GEAE…IGTS) and 255–291 (VSDF…TVGS). Serine 198 carries the post-translational modification Phosphoserine. Residues 201–210 (PTRTVSIGTS) are compositionally biased toward polar residues. Residues 233-502 (CLREGNQKVE…LLKENDAFED (270 aa)) adopt a coiled-coil conformation. Basic and acidic residues-rich tracts occupy residues 255-268 (VSDF…RSEI) and 275-286 (STEKENEEEKGP). Serine 336 bears the Phosphoserine mark. Positions 405 to 571 (TRKESEKVDR…LQIHVMDCII (167 aa)) are interaction with HD. The interaction with MYO6 stretch occupies residues 406 to 514 (RKESEKVDRA…RQSLMEMQSR (109 aa)). Residues 468–473 (DFHAER) carry the UBAN motif. Serine 520 is subject to Phosphoserine. The segment at 541–571 (QRNIPIHSCPKCGEVLPDIDTLQIHVMDCII) adopts a CCHC NOA-type zinc-finger fold. Residues cysteine 549, cysteine 552, histidine 565, and cysteine 569 each coordinate Zn(2+).

In terms of assembly, self-associates. Interacts with HD. Interacts with GTF3A. Interacts with MYO6. Interacts (via UBAN) with ubiquitinated TFRC. Interacts with GTP-bound Rab8 (RAB8A and/or RAB8B). Interacts with TBC1D17. Interacts with TBK1. Interacts with TRAF3. Binds to linear ubiquitin chains. Interacts with LC3 family members MAP1LC3A, MAP1LC3B, GABARAP, GABARAPL1 and GABARAPL2; OPTN phosphorylation increases the association (at least with MAP1LC3B). Interacts with RAB12; the interaction may be indirect. Interacts with TBK1; this interaction leads to the Golgi localization of TBK1 and its subsequent activation. Interacts with palmitoyltransferase ZDHHC17/HIP14; the interaction does not lead to palmitoylation of OPTN. Interacts with CYLD. Interacts with TOM1; the interaction is indirect and is mediated by MYO6, which acts as a bridge between TOM1 and OPTN. Interacts with USP12; the interaction is independent of USP12 deubiquitinase activity and may be involved in regulation of autophagic flux. In terms of processing, phosphorylated by TBK1, leading to restrict bacterial proliferation in case of infection.

The protein localises to the cytoplasm. The protein resides in the perinuclear region. It localises to the golgi apparatus. It is found in the trans-Golgi network. Its subcellular location is the cytoplasmic vesicle. The protein localises to the autophagosome. The protein resides in the recycling endosome. In terms of biological role, plays an important role in the maintenance of the Golgi complex, in membrane trafficking, in exocytosis, through its interaction with myosin VI and Rab8. Links myosin VI to the Golgi complex and plays an important role in Golgi ribbon formation. Negatively regulates the induction of IFNB in response to RNA virus infection. Plays a neuroprotective role in the eye and optic nerve. Probably part of the TNF-alpha signaling pathway that can shift the equilibrium toward induction of cell death. May act by regulating membrane trafficking and cellular morphogenesis via a complex that contains Rab8 and huntingtin (HD). Mediates the interaction of Rab8 with the probable GTPase-activating protein TBC1D17 during Rab8-mediated endocytic trafficking, such as that of transferrin receptor (TFRC/TfR); regulates Rab8 recruitment to tubules emanating from the endocytic recycling compartment. Autophagy receptor that interacts directly with both the cargo to become degraded and an autophagy modifier of the MAP1 LC3 family; targets ubiquitin-coated bacteria (xenophagy) and appears to function in the same pathway as SQSTM1 and CALCOCO2/NDP52. The polypeptide is Optineurin (OPTN) (Macaca fascicularis (Crab-eating macaque)).